Reading from the N-terminus, the 270-residue chain is uncharacterized protein (270 aa).

This is an uncharacterized protein from Bacillus anthracis.